A 137-amino-acid polypeptide reads, in one-letter code: Protein phosphatase 1 regulatory subunit 1B (137 aa).

Residues 1 to 137 (DPKDRKKIQF…EEEEEEEDSQ (137 aa)) are disordered. Thr-33 is modified (phosphothreonine; by PKA). A compositionally biased stretch (basic and acidic residues) spans 40-62 (LXEHSSPEEEASPHQRAAGEGHH). Phosphoserine occurs at positions 44 and 45. The residue at position 74 (Thr-74) is a Phosphothreonine; by CDK5. Polar residues predominate over residues 88-99 (HLQSISNLGENQ). Ser-101 bears the Phosphoserine mark. Residues 108–117 (GELRELGYPR) show a composition bias toward basic and acidic residues. Residues 118-137 (EEEEEEEEDDEEEEEEEDSQ) show a composition bias toward acidic residues. Ser-136 carries the phosphoserine modification.

This sequence belongs to the protein phosphatase inhibitor 1 family. In terms of processing, phosphorylation of Thr-33 is required for activity. Dopamine- and cyclic AMP-regulated neuronal phosphoprotein.

The protein resides in the cytoplasm. In terms of biological role, inhibitor of protein-phosphatase 1. In Sus scrofa (Pig), this protein is Protein phosphatase 1 regulatory subunit 1B (PPP1R1B).